Reading from the N-terminus, the 99-residue chain is Protein translation factor SUI1 homolog (99 aa).

It belongs to the SUI1 family.

The polypeptide is Protein translation factor SUI1 homolog (Sulfolobus acidocaldarius (strain ATCC 33909 / DSM 639 / JCM 8929 / NBRC 15157 / NCIMB 11770)).